We begin with the raw amino-acid sequence, 121 residues long: Large ribosomal subunit protein bL12 (121 aa).

This sequence belongs to the bacterial ribosomal protein bL12 family. In terms of assembly, homodimer. Part of the ribosomal stalk of the 50S ribosomal subunit. Forms a multimeric L10(L12)X complex, where L10 forms an elongated spine to which 2 to 4 L12 dimers bind in a sequential fashion. Binds GTP-bound translation factors.

Forms part of the ribosomal stalk which helps the ribosome interact with GTP-bound translation factors. Is thus essential for accurate translation. In Leuconostoc mesenteroides subsp. mesenteroides (strain ATCC 8293 / DSM 20343 / BCRC 11652 / CCM 1803 / JCM 6124 / NCDO 523 / NBRC 100496 / NCIMB 8023 / NCTC 12954 / NRRL B-1118 / 37Y), this protein is Large ribosomal subunit protein bL12.